Consider the following 333-residue polypeptide: MACSRPPSQCEPTSLPPGPPAGRRHLPLSRRRREMSSNKEQRSAVFVILFALITILILYSSNSANEVFHYGSLRGRSRRPVNLKKWSITDGYVPILGNKTLPSRCHQCVIVSSSSHLLGTKLGPEIERAECTIRMNDAPTTGYSADVGNKTTYRVVAHSSVFRVLRRPQEFVNRTPETVFIFWGPPSKMQKPQGSLVRVIQRAGLVFPNMEAYAVSPGRMRQFDDLFRGETGKDREKSHSWLSTGWFTMVIAVELCDHVHVYGMVPPNYCSQRPRLQRMPYHYYEPKGPDECVTYIQNEHSRKGNHHRFITEKRVFSSWAQLYGITFSHPSWT.

Residues 1–12 (MACSRPPSQCEP) are compositionally biased toward polar residues. The segment at 1–26 (MACSRPPSQCEPTSLPPGPPAGRRHL) is disordered. Over 1–43 (MACSRPPSQCEPTSLPPGPPAGRRHLPLSRRRREMSSNKEQRS) the chain is Cytoplasmic. The chain crosses the membrane as a helical; Signal-anchor for type II membrane protein span at residues 44–64 (AVFVILFALITILILYSSNSA). Residues 65–333 (NEVFHYGSLR…GITFSHPSWT (269 aa)) lie on the Lumenal side of the membrane. The N-linked (GlcNAc...) asparagine glycan is linked to Asn-98. The cysteines at positions 108 and 256 are disulfide-linked.

This sequence belongs to the glycosyltransferase 29 family. In terms of tissue distribution, expressed in kidney, in proximal tubule epithelial cells. Expressed in colon cell lines.

The protein resides in the golgi apparatus membrane. The enzyme catalyses a ganglioside GM1b (d18:1(4E)) + CMP-N-acetyl-beta-neuraminate = a ganglioside GD1alpha (d18:1(4E)) + CMP + H(+). It carries out the reaction N-acetyl-alpha-neuraminosyl-(2-&gt;3)-beta-D-galactosyl-(1-&gt;3)-N-acetyl-beta-D-glucosaminyl-(1-&gt;3)-beta-D-galactosyl-(1-&gt;4)-beta-D-glucosyl-(1&lt;-&gt;1')-N-acyl-sphing-4-enine + CMP-N-acetyl-beta-neuraminate = N-acetyl-alpha-neuraminosyl-(2-&gt;3)-beta-D-galactosyl-(1-&gt;3)-[N-acetyl-alpha-neuraminosyl-(2-&gt;6)]-N-acetyl-beta-D-glucosaminyl-(1-&gt;3)-beta-D-galactosyl-(1-&gt;4)-beta-D-glucosyl-(1&lt;-&gt;1')-N-acyl-sphing-4-enine + CMP + H(+). The catalysed reaction is a globoside MSGG + CMP-N-acetyl-beta-neuraminate = a globoside DSGG + CMP + H(+). It catalyses the reaction a ganglioside GD1a (d18:1(4E)) + CMP-N-acetyl-beta-neuraminate = a ganglioside GT1aalpha (d18:1(4E)) + CMP + H(+). The enzyme catalyses a ganglioside GT1b (d18:1(4E)) + CMP-N-acetyl-beta-neuraminate = a ganglioside GQ1balpha (d18:1(4E)) + CMP + H(+). It carries out the reaction 3-O-[alpha-Neu5Ac-(2-&gt;3)-beta-D-Gal-(1-&gt;3)-alpha-D-GalNAc]-L-Ser-[protein] + CMP-N-acetyl-beta-neuraminate = a 3-O-{alpha-Neu5Ac-(2-&gt;3)-beta-D-Gal-(1-&gt;3)-[alpha-Neu5Ac-(2-&gt;6)]-alpha-D-GalNAc}-L-seryl-[protein] + CMP + H(+). The catalysed reaction is 3-O-[alpha-Neu5Ac-(2-&gt;3)-beta-D-Gal-(1-&gt;3)-alpha-D-GalNAc]-L-Thr-[protein] + CMP-N-acetyl-beta-neuraminate = a 3-O-{alpha-Neu5Ac-(2-&gt;3)-beta-D-Gal-(1-&gt;3)-[alpha-Neu5Ac-(2-&gt;6)]-alpha-D-GalNAc}-L-threonyl-[protein] + CMP + H(+). Its function is as follows. Transfers the sialyl group (N-acetyl-alpha-neuraminyl or NeuAc) from CMP-NeuAc onto glycoproteins and glycolipids, forming an alpha-2,6-linkage. Produces branched type disialyl structures by transfer of a sialyl group onto the GalNAc or GlcNAc residue inside backbone core chains having a terminal sialic acid with an alpha-2,3-linkage on Gal. ST6GalNAcVI prefers glycolipids to glycoproteins, predominantly catalyzing the biosynthesis of ganglioside GD1alpha from GM1b. Besides GMb1, MSGG and other glycolipids, it shows activity towards sialyl Lc4Cer generating disialyl Lc4Cer, which can lead to the synthesis of disialyl Lewis a (Le(a)), suggested to be a cancer-associated antigen. Also has activity toward GD1a and GT1b, and can generate DSGG (disialylgalactosylgloboside) from MSGG (monosialylgalactosylgloboside). In Homo sapiens (Human), this protein is Alpha-N-acetylgalactosaminide alpha-2,6-sialyltransferase 6 (ST6GALNAC6).